Reading from the N-terminus, the 354-residue chain is Uptake hydrogenase small subunit (354 aa).

The tat-type signal signal peptide spans 1–44 (MSQLETXYDVMRRQGITRRSFLKYCSLTGRPCLGPTFAPQIAHA). Positions 61, 64, 156, 190, 228, 231, 256, and 262 each coordinate [4Fe-4S] cluster. [3Fe-4S] cluster is bound by residues cysteine 271, cysteine 290, and cysteine 293.

This sequence belongs to the [NiFe]/[NiFeSe] hydrogenase small subunit family. Heterodimer of a large and a small subunit. It depends on [4Fe-4S] cluster as a cofactor. Requires [3Fe-4S] cluster as cofactor. Predicted to be exported by the Tat system. The position of the signal peptide cleavage has not been experimentally proven.

The protein resides in the cell membrane. It carries out the reaction H2 + A = AH2. Functionally, this enzyme recycles the H(2) produced by nitrogenase to increase the production of ATP and to protect nitrogenase against inhibition or damage by O(2) under carbon- or phosphate-limited conditions. The chain is Uptake hydrogenase small subunit (hupA) from Azotobacter chroococcum mcd 1.